The following is a 367-amino-acid chain: Phosphoribosylaminoimidazole-succinocarboxamide synthase (367 aa).

Belongs to the SAICAR synthetase family.

It carries out the reaction 5-amino-1-(5-phospho-D-ribosyl)imidazole-4-carboxylate + L-aspartate + ATP = (2S)-2-[5-amino-1-(5-phospho-beta-D-ribosyl)imidazole-4-carboxamido]succinate + ADP + phosphate + 2 H(+). Its pathway is purine metabolism; IMP biosynthesis via de novo pathway; 5-amino-1-(5-phospho-D-ribosyl)imidazole-4-carboxamide from 5-amino-1-(5-phospho-D-ribosyl)imidazole-4-carboxylate: step 1/2. The protein is Phosphoribosylaminoimidazole-succinocarboxamide synthase of Shewanella baltica (strain OS223).